A 381-amino-acid chain; its full sequence is Probable serine/threonine-protein kinase PBL25 (381 aa).

Residue cysteine 3 is the site of S-palmitoyl cysteine attachment. The interval 16 to 41 (GSSMPAPYKQPNSPKRTTGEVVAKNA) is disordered. Threonine 54 carries the phosphothreonine modification. The Protein kinase domain occupies 65–342 (FRQECLIGEG…SDVITALSFL (278 aa)). ATP-binding positions include 71–79 (IGEGGFGRV) and lysine 94. Tyrosine 139 bears the Phosphotyrosine mark. Aspartate 192 (proton acceptor) is an active-site residue. Phosphoserine is present on residues serine 196 and serine 226. Threonine 232 is modified (phosphothreonine). A Phosphotyrosine modification is found at tyrosine 240. Positions 347 to 381 (NSSNTGSNHLQQNRSNKYQDAVQWDSSPRYANSQM) are disordered. Residues 355-381 (HLQQNRSNKYQDAVQWDSSPRYANSQM) show a composition bias toward polar residues.

It belongs to the protein kinase superfamily. Ser/Thr protein kinase family.

The protein resides in the cell membrane. It catalyses the reaction L-seryl-[protein] + ATP = O-phospho-L-seryl-[protein] + ADP + H(+). The catalysed reaction is L-threonyl-[protein] + ATP = O-phospho-L-threonyl-[protein] + ADP + H(+). Its function is as follows. May be involved in plant defense signaling. The polypeptide is Probable serine/threonine-protein kinase PBL25 (Arabidopsis thaliana (Mouse-ear cress)).